The chain runs to 107 residues: Thioredoxin (107 aa).

The Thioredoxin domain maps to 2-107 (DSIVHVTDDS…QLTAFLDSNX (106 aa)). Cys-32 and Cys-35 are disulfide-bonded.

The protein belongs to the thioredoxin family.

Functionally, participates in various redox reactions through the reversible oxidation of its active center dithiol to a disulfide and catalyzes dithiol-disulfide exchange reactions. The sequence is that of Thioredoxin (trxA) from Allochromatium vinosum (Chromatium vinosum).